The sequence spans 378 residues: Alcohol dehydrogenase 1 (378 aa).

Position 48 (C48) interacts with Zn(2+). 49–53 (HTDVL) contributes to the NAD(+) binding site. Zn(2+) contacts are provided by H69, C99, C102, C105, C113, and C177. Residues 202–207 (GIGTVG), D226, K231, 274–276 (TGV), 297–299 (IGA), and 321–323 (TAF) contribute to the NAD(+) site.

It belongs to the zinc-containing alcohol dehydrogenase family. Class-IV subfamily. As to quaternary structure, homodimer. Zn(2+) is required as a cofactor. Present in non-glandular trichome cells.

The protein localises to the nucleus. Its subcellular location is the cytoplasm. It is found in the cytosol. It catalyses the reaction (+)-artemisinic alcohol + NAD(+) = (+)-artemisinic aldehyde + NADH + H(+). It functions in the pathway sesquiterpene biosynthesis. Its function is as follows. Involved in the biosynthesis of the antimalarial endoperoxide artemisinin. Catalyzes the conversion of artemisinic alcohol into artemisinic aldehyde. The chain is Alcohol dehydrogenase 1 from Artemisia annua (Sweet wormwood).